The primary structure comprises 341 residues: Phosphate acyltransferase (341 aa).

Belongs to the PlsX family. In terms of assembly, homodimer. Probably interacts with PlsY.

The protein localises to the cytoplasm. The catalysed reaction is a fatty acyl-[ACP] + phosphate = an acyl phosphate + holo-[ACP]. The protein operates within lipid metabolism; phospholipid metabolism. Its function is as follows. Catalyzes the reversible formation of acyl-phosphate (acyl-PO(4)) from acyl-[acyl-carrier-protein] (acyl-ACP). This enzyme utilizes acyl-ACP as fatty acyl donor, but not acyl-CoA. This is Phosphate acyltransferase from Aliivibrio fischeri (strain ATCC 700601 / ES114) (Vibrio fischeri).